The primary structure comprises 352 residues: Protein NDRG4 (352 aa).

Phosphoserine occurs at positions 298, 317, and 323. Positions 314–323 are enriched in low complexity; that stretch reads RTASLTSASS. Residues 314–352 form a disordered region; sequence RTASLTSASSVDGSRPQACTHSESSEGLGQVNHTMEVSC. The span at 330–352 shows a compositional bias: polar residues; sequence QACTHSESSEGLGQVNHTMEVSC.

This sequence belongs to the NDRG family. In terms of processing, phosphorylated in an aortic smooth muscle cell line, following PDGF treatment. As to expression, expressed predominantly in brain and heart (at protein level). In the brain, detected in astrocytes. Isoform 1 and isoform 2 are only expressed in brain. Isoform 3 is expressed in both heart and brain. Up-regulated in glioblastoma multiforme cells.

It localises to the cytoplasm. Its subcellular location is the cytosol. Its function is as follows. Contributes to the maintenance of intracerebral BDNF levels within the normal range, which is necessary for the preservation of spatial learning and the resistance to neuronal cell death caused by ischemic stress. May enhance growth factor-induced ERK1 and ERK2 phosphorylation, including that induced by PDGF and FGF. May attenuate NGF-promoted ELK1 phosphorylation in a microtubule-dependent manner. This chain is Protein NDRG4 (NDRG4), found in Homo sapiens (Human).